The sequence spans 829 residues: Protein Jade-1 (829 aa).

The segment covering 1–10 (MKRSRVPSTS) has biased composition (polar residues). The interval 1–40 (MKRSRVPSTSEDSDNGSNSTSWSQHSNSKHRKQSGKRPSE) is disordered. A compositionally biased stretch (low complexity) spans 15–26 (NGSNSTSWSQHS). The segment at 196–246 (DVVCDVCQSPDGEDGNEMVFCDKCNICVHQACYGILKVPEGSWLCRTCALG) adopts a PHD-type 1 zinc-finger fold. A C2HC pre-PHD-type zinc finger spans residues 248–282 (FPKCHLCPKKGGAMKPTRSGTKWVHVSCALWIPEV). The PHD-type 2 zinc-finger motif lies at 306–362 (LICCLCKEKTGACIQCSAKSCRVAFHVTCGLHCGLKMNTILTEADEVKFKSFCPKHS). Disordered stretches follow at residues 368-408 (EEEG…PEET), 556-651 (PPVP…RRKS), and 697-829 (ATAP…VLAS). The segment covering 374–390 (DRPVKVPTREDRSRNRG) has biased composition (basic and acidic residues). Polar residues-rich tracts occupy residues 394–405 (SASSQTRLSQNP), 570–586 (GQNS…NSYR), and 607–619 (SGDS…VMSA). The segment covering 622-648 (RRSEGRTRSGESHRKEEESERPLEDRR) has biased composition (basic and acidic residues). The span at 697-714 (ATAPNMYSGSPRKTNASH) shows a compositional bias: polar residues. Basic and acidic residues predominate over residues 738–754 (KRSERTSAGRQTERQEA). Residues 762-774 (SSLKTFSTSPSSP) show a composition bias toward low complexity. The span at 782-792 (TGSENRRHLEE) shows a compositional bias: basic and acidic residues.

This sequence belongs to the JADE family. Component of the HBO1 complex composed.

It is found in the nucleus. It localises to the chromosome. The protein localises to the cytoplasm. Its subcellular location is the cytoskeleton. The protein resides in the cilium basal body. Scaffold subunit of some HBO1 complexes, which have a histone H4 acetyltransferase activity. Plays a key role in HBO1 complex by directing KAT7/HBO1 specificity towards histone H4 acetylation (H4K5ac, H4K8ac and H4K12ac), regulating DNA replication initiation, regulating DNA replication initiation. The polypeptide is Protein Jade-1 (jade1) (Danio rerio (Zebrafish)).